The primary structure comprises 231 residues: Endo-1,4-beta-xylanase A (231 aa).

Residues 1–19 (MVSFKSLLVAVSALTGALA) form the signal peptide. Residue Asn32 is glycosylated (N-linked (GlcNAc...) asparagine). The 189-residue stretch at 41 to 229 (QVTGNSEGYH…SSGSSSIYVQ (189 aa)) folds into the GH11 domain. Catalysis depends on Glu125, which acts as the Nucleophile. Glu216 functions as the Proton donor in the catalytic mechanism.

The protein belongs to the glycosyl hydrolase 11 (cellulase G) family.

It localises to the secreted. The enzyme catalyses Endohydrolysis of (1-&gt;4)-beta-D-xylosidic linkages in xylans.. It participates in glycan degradation; xylan degradation. Its activity is regulated as follows. Inhibited by the proteinaceous endoxylanase inhibitor I from T.aestivum (TAXI-I). In terms of biological role, endo-1,4-beta-xylanase involved in the hydrolysis of xylan, a major structural heterogeneous polysaccharide found in plant biomass representing the second most abundant polysaccharide in the biosphere, after cellulose. Plays an important role in causing fusarium head blight (FHB) on cereal crops. This chain is Endo-1,4-beta-xylanase A (XYLA), found in Gibberella zeae (strain ATCC MYA-4620 / CBS 123657 / FGSC 9075 / NRRL 31084 / PH-1) (Wheat head blight fungus).